Reading from the N-terminus, the 224-residue chain is Large ribosomal subunit protein uL3 (224 aa).

Gln159 carries the post-translational modification N5-methylglutamine.

This sequence belongs to the universal ribosomal protein uL3 family. In terms of assembly, part of the 50S ribosomal subunit. Forms a cluster with proteins L14 and L19. In terms of processing, methylated by PrmB.

Its function is as follows. One of the primary rRNA binding proteins, it binds directly near the 3'-end of the 23S rRNA, where it nucleates assembly of the 50S subunit. The protein is Large ribosomal subunit protein uL3 of Herminiimonas arsenicoxydans.